The sequence spans 69 residues: Beta-defensin 43 (69 aa).

The signal sequence occupies residues 1 to 22 (MRVLFSILGVLTLLSIVPLARS). 2 disulfides stabilise this stretch: Cys29–Cys56 and Cys35–Cys49.

This sequence belongs to the beta-defensin family.

The protein resides in the secreted. Functionally, has bactericidal activity. The sequence is that of Beta-defensin 43 (Defb43) from Mus musculus (Mouse).